The following is a 563-amino-acid chain: MDIRRTILWMIFSFSLLLLWNNWQIHNGKPSLFGTPPASSAASPAEGQQAAANGQAATPSVPTTPAAAAASTVPGATAAPAAAKVEQVVVSTDVLRLTFDTTGAQLIRAELLKYPTSGQPNKPTVLLDRSPELTYVVQSGLVGAPNGQSFPNHQTPFRLVSTDHELKGDSLQVVFEADSGGLKVTKTYTLHRGRYDIDVQHSLANTSDAPLAPSLYLQLERDGNDPADTSSFYHTFTGVAVYSEQDKFQKITFSDIAKGKGSYIKQADNGWLAVVQHYFATAWVPPQGKQRTNELLQVQPNLYAARSIEAVGTVQPGATAQVDSRLWVGPQDQKAMAAVAPGLELVVDYGWLTIIAKPLFSLLTWLHSLLGNWGWAIVALTVIIKAVFFPLAAASYRSMARMKQVAPRLQALKEKYGDDRQKLNQAMMEMYRTEKINPLGGCLPMVVQIPVFIALYWVLLASVEMRGAPWILWVHDLSVRDPYFILPAVMMATMFLQIKLNPTPPDPIQAKVMMIMPLVFGGMMFFFPAGLVLYWCVNNTLSIAQQWTITRNLQRKAEAAANR.

A helical transmembrane segment spans residues 6 to 26 (TILWMIFSFSLLLLWNNWQIH). Residues 36–68 (PPASSAASPAEGQQAAANGQAATPSVPTTPAAA) form a disordered region. 4 helical membrane-spanning segments follow: residues 373–393 (WGWA…PLAA), 443–463 (LPMV…LASV), 482–502 (PYFI…KLNP), and 512–532 (VMMI…AGLV).

This sequence belongs to the OXA1/ALB3/YidC family. Type 1 subfamily. In terms of assembly, interacts with the Sec translocase complex via SecD. Specifically interacts with transmembrane segments of nascent integral membrane proteins during membrane integration.

It localises to the cell inner membrane. Functionally, required for the insertion and/or proper folding and/or complex formation of integral membrane proteins into the membrane. Involved in integration of membrane proteins that insert both dependently and independently of the Sec translocase complex, as well as at least some lipoproteins. Aids folding of multispanning membrane proteins. The polypeptide is Membrane protein insertase YidC (Bordetella petrii (strain ATCC BAA-461 / DSM 12804 / CCUG 43448)).